We begin with the raw amino-acid sequence, 139 residues long: MDTPMLLVTNVNDAIQNDDLRMDSLTNENAWFLNNISYIFEDDEPIQQEDHSNYENLFIIDSDLNGKISGVELLSEKWQLLSYDQNKPYNCISLRVMDELRADLSPQDGDVKDLDSLARRYHDRNVQIRNLLDSLIQED.

Belongs to the ATG31 family. Forms a stable complex with ATG17 and ATG29. Interacts directly with ATG29. The ATG17-ATG29-ATG31 complex interacts with the ATG1-ATG13 complex. Note=The interaction with the ATG1-ATG13 complex is induced by starvation.

The protein resides in the preautophagosomal structure. Plays a role in starvation-induced autophagy. Involved in mitophagy. Functions with ATG17 and ATG29 at the preautophagosomal structure (PAS) in order to form normal autophagosomes under starvation conditions. The chain is Autophagy-related protein 31 from Kluyveromyces marxianus (strain DMKU3-1042 / BCC 29191 / NBRC 104275) (Yeast).